We begin with the raw amino-acid sequence, 380 residues long: Ubiquitin-like protein 7 (380 aa).

A Ubiquitin-like domain is found at Ala18–Asp98. Residues Thr200–Ile313 form a disordered region. Low complexity predominate over residues Asp206–Pro221. Phosphoserine is present on Ser230. 2 stretches are compositionally biased toward low complexity: residues Ser239–Pro253 and Ser270–Thr293. Polar residues predominate over residues Gln294–Ile313. Residues Ser333–Gly377 enclose the UBA domain.

Binds ubiquitin. Interacts with MAVS; this interaction enhances TRIM21-dependent 'Lys-27'-linked polyubiquitination of MAVS. Deubiquitinated by OTUD4 which stabilizes UBL7 expression.

Functionally, interferon-stimulated protein that positively regulates RNA virus-triggered innate immune signaling. Mechanistically, promotes 'Lys-27'-linked polyubiquitination of MAVS through TRIM21 leading to enhanced the IFN signaling pathway. The chain is Ubiquitin-like protein 7 (Ubl7) from Mus musculus (Mouse).